The sequence spans 32 residues: Periplasmic [NiFeSe] hydrogenase small subunit (32 aa).

[4Fe-4S] cluster-binding residues include C18 and C21.

This sequence belongs to the [NiFe]/[NiFeSe] hydrogenase small subunit family. In terms of assembly, heterodimer of a large and a small subunit. It depends on [3Fe-4S] cluster as a cofactor. [4Fe-4S] cluster is required as a cofactor.

It is found in the periplasm. It carries out the reaction H2 + A = AH2. This chain is Periplasmic [NiFeSe] hydrogenase small subunit, found in Desulfomicrobium norvegicum (strain DSM 1741 / NCIMB 8310) (Desulfovibrio baculatus (strain Norway 4)).